The chain runs to 689 residues: Translation initiation factor IF-2 (689 aa).

The segment at 41–109 is disordered; that stretch reads DYERVFGGGN…EAPAAEEREA (69 aa). A compositionally biased stretch (basic residues) spans 61–70; the sequence is RKGRQKKRRR. A compositionally biased stretch (low complexity) spans 80–94; sequence RGPRAAAPSRPSRGR. The span at 96 to 109 shows a compositional bias: basic and acidic residues; the sequence is AAREEAPAAEEREA. The region spanning 192–361 is the tr-type G domain; the sequence is EKPPVITVMG…LVVAELEELR (170 aa). The interval 201-208 is G1; that stretch reads GHVDHGKT. Residue 201 to 208 participates in GTP binding; sequence GHVDHGKT. A G2 region spans residues 226–230; it reads GITQH. The segment at 247-250 is G3; the sequence is DTPG. GTP-binding positions include 247-251 and 301-304; these read DTPGH and NKID. A G4 region spans residues 301–304; it reads NKID. Residues 337–339 are G5; sequence SAK.

The protein belongs to the TRAFAC class translation factor GTPase superfamily. Classic translation factor GTPase family. IF-2 subfamily.

It is found in the cytoplasm. One of the essential components for the initiation of protein synthesis. Protects formylmethionyl-tRNA from spontaneous hydrolysis and promotes its binding to the 30S ribosomal subunits. Also involved in the hydrolysis of GTP during the formation of the 70S ribosomal complex. This is Translation initiation factor IF-2 from Rubrobacter xylanophilus (strain DSM 9941 / JCM 11954 / NBRC 16129 / PRD-1).